The following is a 60-amino-acid chain: MAVQQNKKTPSKRGMHRSHDFLVAPQLSVEPTTGETHMRHHISPNGFYRGRKVLKTKNDE.

Positions Met-1–Glu-60 are disordered. Over residues Arg-49–Glu-60 the composition is skewed to basic residues.

This sequence belongs to the bacterial ribosomal protein bL32 family.

In Janthinobacterium sp. (strain Marseille) (Minibacterium massiliensis), this protein is Large ribosomal subunit protein bL32.